Here is an 885-residue protein sequence, read N- to C-terminus: Leucine--tRNA ligase (885 aa).

The 'HIGH' region signature appears at 48-58 (PYPSGKLHMGH). The short motif at 639–643 (TMSKS) is the 'KMSKS' region element. K642 is a binding site for ATP.

It belongs to the class-I aminoacyl-tRNA synthetase family.

The protein resides in the cytoplasm. The enzyme catalyses tRNA(Leu) + L-leucine + ATP = L-leucyl-tRNA(Leu) + AMP + diphosphate. This chain is Leucine--tRNA ligase, found in Bordetella avium (strain 197N).